The primary structure comprises 483 residues: Rhamnulokinase (483 aa).

11–15 (ASSGR) is an ATP binding site. Substrate contacts are provided by residues Gly79 and 234-236 (HDT). The active-site Proton acceptor is Asp235. Thr257 is a binding site for ATP. Residue Asn294 participates in substrate binding. Gln302 lines the ATP pocket. Cys352 and Cys369 are oxidised to a cystine. Gly401 contributes to the ATP binding site.

The protein belongs to the rhamnulokinase family. Mg(2+) serves as cofactor.

It carries out the reaction L-rhamnulose + ATP = L-rhamnulose 1-phosphate + ADP + H(+). It participates in carbohydrate degradation; L-rhamnose degradation; glycerone phosphate from L-rhamnose: step 2/3. Its function is as follows. Involved in the catabolism of L-rhamnose (6-deoxy-L-mannose). Catalyzes the transfer of the gamma-phosphate group from ATP to the 1-hydroxyl group of L-rhamnulose to yield L-rhamnulose 1-phosphate. The polypeptide is Rhamnulokinase (Listeria monocytogenes serotype 4b (strain F2365)).